The following is a 1189-amino-acid chain: Pumilio homolog 1 (1189 aa).

5 disordered regions span residues 24–65, 233–288, 491–525, 614–652, and 743–774; these read QHAQ…SSPV, SCLR…QNGI, QQTT…GQQT, AGTT…NNSL, and GPVG…SSLN. Positions 45–58 are enriched in low complexity; that stretch reads QAQPQPAANQALAA. The segment covering 250–277 has biased composition (basic and acidic residues); sequence NDKGDKKNKGTFDGDKLGDLKEEGDVMD. Residues 491 to 503 are compositionally biased toward low complexity; the sequence is QQTTQQTQQGQQQ. Polar residues predominate over residues 512–525; the sequence is RPLTPNQNQQGQQT. Composition is skewed to low complexity over residues 627–652 and 764–774; these read QQPQ…NNSL and LSSHGSSSSLN. One can recognise a PUM-HD domain in the interval 829 to 1171; it reads GRSRLLEDFR…HILAKLEKYY (343 aa). Pumilio repeat units follow at residues 849–884, 885–920, 921–958, 959–994, 995–1030, 1031–1066, 1067–1102, and 1106–1145; these read EIAG…LVFN, EILQ…ALAE, RIRG…EMVR, ELDG…FIID, AFKG…PILE, ELHQ…KIVA, EIRG…MLID, and TMND…IVMH. The tract at residues 864 to 868 is adenine-nucleotide binding in RNA target; the sequence is SRFIQ. The tract at residues 900 to 904 is uracil-nucleotide binding in RNA target; the sequence is NYVIQ. An adenine-nucleotide binding in RNA target region spans residues 936–940; it reads CRVIQ. Positions 974 to 978 are non-specific-nucleotide binding in RNA target; it reads NHVVQ. Residues 1010–1014 form an adenine-nucleotide binding in RNA target region; the sequence is CRVIQ. The interval 1046–1050 is uracil-nucleotide binding in RNA target; that stretch reads NYVIQ. 2 guanine-nucleotide binding in RNA target regions span residues 1082-1086 and 1083-1086; these read SNVVE and NVVE. Positions 1125-1129 are uracil-nucleotide binding in RNA target; sequence NYVVQ.

In terms of tissue distribution, detected in embryonic male and female gonads, heart, liver and muscle. Detected in adult brain, testis, ovary, heart, lung, spleen, kidney and muscle.

Its subcellular location is the cytoplasm. It localises to the P-body. It is found in the cytoplasmic granule. Its function is as follows. Sequence-specific RNA-binding protein that acts as a post-transcriptional repressor by binding the 3'-UTR of mRNA targets. Binds to an RNA consensus sequence, the Pumilio Response Element (PRE), 5'-UGUANAUA-3', that is related to the Nanos Response Element (NRE). Mediates post-transcriptional repression of transcripts via different mechanisms: acts via direct recruitment of the CCR4-POP2-NOT deadenylase leading to translational inhibition and mRNA degradation. Also mediates deadenylation-independent repression by promoting accessibility of miRNAs. The sequence is that of Pumilio homolog 1 (PUM1) from Gallus gallus (Chicken).